Here is a 371-residue protein sequence, read N- to C-terminus: Alanine dehydrogenase (371 aa).

2 residues coordinate substrate: Arg15 and Lys75. Residue His96 is the Proton donor/acceptor of the active site. NAD(+)-binding positions include Ser134, Asp198, Arg203, Ser220, 239 to 240, 267 to 270, Lys279, and 298 to 301; these read VL, VAID, and VANM. The active-site Proton donor/acceptor is the Asp270.

The protein belongs to the AlaDH/PNT family. Mg(2+) serves as cofactor.

It carries out the reaction L-alanine + NAD(+) + H2O = pyruvate + NH4(+) + NADH + H(+). Its pathway is amino-acid degradation; L-alanine degradation via dehydrogenase pathway; NH(3) and pyruvate from L-alanine: step 1/1. Catalyzes the reversible reductive amination of pyruvate to L-alanine. This is Alanine dehydrogenase from Halomonas elongata (strain ATCC 33173 / DSM 2581 / NBRC 15536 / NCIMB 2198 / 1H9).